We begin with the raw amino-acid sequence, 987 residues long: MTPALREATAKGISFSSLPSTMESDKMLYMESPRTVDEKLKGDTFSQMLGFPTPEPTLNTNFVNLKHFGSPQSSKHYQTVFLMRSNSTLNKHNENYKQKKLGEPSCNKLKNILYNGSNIQLSKICLSHSEEFIKKEPLSDTTSQCMKDVQIILDSNITKDTNVDKVQLQNCKWYQENALLDKVTDAEIKKGLLHCTQKKIVPGHSNVPVSSSAAEKEEEVHARLLHCVSKQKILLSQARRTQKHLQMLLAKHVVKHYGQQMKLSMKHQLPKMKTFHEPTTILGNSLPKCTEIKPEVNTLTAENKLWDDAKNGFARCTAAEIQRFAFSATGLLSHVEEGLDSDATDSSSDDDLDEYTLRKNVAVNCSTEWKWLVDRARVGSRWTWLQAQISDLECKIQQLTDIHRQIRASKGIVVLEECQLPKDILKKQMQFADQAASLNILGNPQVPQECQDPVPEQDFEMSPSSPTLLLRNIEKQSAQLTEIINSLIAPLNLSPTSSPLSSKSCSHKCLANGIYRSASENLDELSSSSSWLLNQKHSKKKRKDRTRLKSSSLTFMSTSARTRPLQSFHKRKLYRLSPTFYWTPQTLPSKETAFLNTTQMPCLQSASTWSSYEHNSESYLLREHVSELDSSFHSVLSLPSDVPLHFHFETLLKKTEIKGNLAENKFVDEYIISPSPVHSTLNQWRNGYSPICKPQIRSESSAQLLQGRKKRHLSETALGERTKLEESDFQHTESGSHSNFTAVSNVNVLSRIQNSSRNTARRRLRSESSYDIDNIVIPMSLVAPAKLEKLQYKEILTPSWRMVVLQPLDEYNLGKEEIEDLSDEVFSLRHKKYEEREQARWSLWEQSKWHRRNSRAYSKNVEGQDLLLKEYPNNFSSSQQCAAASPPGLPSENQDLCAYGLPSLNQSQETKSLWWERRAFPLKGEDMAALLCQDEKKDQVERSSTAFHGEIFGTSVPENGHHPKKQSDGMEEYKTFGLGLTNVKKNR.

Residue Lys134 forms a Glycyl lysine isopeptide (Lys-Gly) (interchain with G-Cter in SUMO2) linkage. A Phosphoserine modification is found at Ser462. The segment at 708-738 is disordered; sequence RKKRHLSETALGERTKLEESDFQHTESGSHS. The segment covering 718–731 has biased composition (basic and acidic residues); sequence LGERTKLEESDFQH. The PEHE domain occupies 794 to 915; the sequence is EILTPSWRMV…QSQETKSLWW (122 aa). Lys859 carries the N6-acetyllysine modification. A disordered region spans residues 949–972; the sequence is GEIFGTSVPENGHHPKKQSDGMEE. The segment covering 959–972 has biased composition (basic and acidic residues); the sequence is NGHHPKKQSDGMEE.

Acetylated on lysine residues by KAT8 upon ionizing radiation-induced DNA damage; deacetylated by HDAC3.

This chain is KAT8 regulatory NSL complex subunit 1-like protein (KANSL1L), found in Homo sapiens (Human).